The primary structure comprises 269 residues: Photosystem I assembly factor PSA3, chloroplastic (269 aa).

The N-terminal 37 residues, 1-37 (MGALPVAHSLALTAAFLPCRRPAAHGRCRRRRYRAVV), are a transit peptide targeting the chloroplast.

It localises to the plastid. It is found in the chloroplast thylakoid membrane. Its function is as follows. Nuclear genome-encoded factor required for the accumulation of photosystem I (PSI). Functions as a PSI biogenesis factor. Cooperates with PYG7 to promote the stable assembly of PSI in the thylakoid membrane. May target primarily the PsaC subunit. Does not seem to be required for the expression of chloroplast genes encoding PSI subunits. The polypeptide is Photosystem I assembly factor PSA3, chloroplastic (Zea mays (Maize)).